Consider the following 601-residue polypeptide: MTKVPVSHIRNFSIIAHIDHGKSTLADRLLQATGTVADREMKEQFLDTMDLERERGITIKLQAARMNYHAKDGEEYVLNLIDTPGHVDFSYEVSRSLAACEGALLVVDASQGVEAQTLANVYLALEHDLEIIPVLNKIDLPGAEPERVKEEIEEIIGLDCSGAILASAKEGIGIPEILESIVQLVPPPQDTIGEKLRALIFDSYYDSYRGVIVYFRVMDGTIAKGDRVRLMASKKEYEIDDLGVLSPTQQPVQELHAGEVGYFSAAIKAVEDARVGDTITLAKKQAQDPLPGYRSANPMVFCGLFPTDADQFPDLREALDKLKLNDAALSYEAETSSAMGFGFRCGFLGLLHMEIVQERLEREYGLDLIVTSPSVVYQVTTSKEEVILVDNPNFLPEPNLREKIEEPYVRVEMITPEEYVGTLMELGQSRRGVFKDMKYLAQGRTTLVYEIPLAEVVTDFFDQMKSRSRGYASMEYHLIGYRENPLVKLDIMINAEPVDALAIIVHRDKAYGVGRALAEKLKELIPRHQFKVPIQASIGSKVIASEHIPALRKDVLAKCYGGDISRKKKLLQKQAKGKKRMKSLGTVDVPQEAFMAVLRLD.

Residues 7–189 (SHIRNFSIIA…SIVQLVPPPQ (183 aa)) enclose the tr-type G domain. GTP-binding positions include 19–24 (DHGKST) and 136–139 (NKID).

This sequence belongs to the TRAFAC class translation factor GTPase superfamily. Classic translation factor GTPase family. LepA subfamily.

The protein localises to the cell inner membrane. The catalysed reaction is GTP + H2O = GDP + phosphate + H(+). Required for accurate and efficient protein synthesis under certain stress conditions. May act as a fidelity factor of the translation reaction, by catalyzing a one-codon backward translocation of tRNAs on improperly translocated ribosomes. Back-translocation proceeds from a post-translocation (POST) complex to a pre-translocation (PRE) complex, thus giving elongation factor G a second chance to translocate the tRNAs correctly. Binds to ribosomes in a GTP-dependent manner. In Trichodesmium erythraeum (strain IMS101), this protein is Elongation factor 4.